The sequence spans 167 residues: Crossover junction endodeoxyribonuclease RuvC (167 aa).

Catalysis depends on residues Asp8, Glu67, and Asp139. 3 residues coordinate Mg(2+): Asp8, Glu67, and Asp139.

Belongs to the RuvC family. Homodimer which binds Holliday junction (HJ) DNA. The HJ becomes 2-fold symmetrical on binding to RuvC with unstacked arms; it has a different conformation from HJ DNA in complex with RuvA. In the full resolvosome a probable DNA-RuvA(4)-RuvB(12)-RuvC(2) complex forms which resolves the HJ. The cofactor is Mg(2+).

Its subcellular location is the cytoplasm. The catalysed reaction is Endonucleolytic cleavage at a junction such as a reciprocal single-stranded crossover between two homologous DNA duplexes (Holliday junction).. The RuvA-RuvB-RuvC complex processes Holliday junction (HJ) DNA during genetic recombination and DNA repair. Endonuclease that resolves HJ intermediates. Cleaves cruciform DNA by making single-stranded nicks across the HJ at symmetrical positions within the homologous arms, yielding a 5'-phosphate and a 3'-hydroxyl group; requires a central core of homology in the junction. The consensus cleavage sequence is 5'-(A/T)TT(C/G)-3'. Cleavage occurs on the 3'-side of the TT dinucleotide at the point of strand exchange. HJ branch migration catalyzed by RuvA-RuvB allows RuvC to scan DNA until it finds its consensus sequence, where it cleaves and resolves the cruciform DNA. In Halorhodospira halophila (strain DSM 244 / SL1) (Ectothiorhodospira halophila (strain DSM 244 / SL1)), this protein is Crossover junction endodeoxyribonuclease RuvC.